The following is an 817-amino-acid chain: Two pore calcium channel protein 1 (817 aa).

Over M1–E113 the chain is Cytoplasmic. Positions S20–G65 are disordered. Polar residues predominate over residues S26–S51. The chain crosses the membrane as a helical span at residues L114–L134. The Extracellular portion of the chain corresponds to K135–H137. The chain crosses the membrane as a helical span at residues T138–M158. Over K159–K172 the chain is Cytoplasmic. The chain crosses the membrane as a helical span at residues R173–V193. Residues R194–T202 lie on the Extracellular side of the membrane. Residues R203–R221 traverse the membrane as a helical segment. Residues N222–D235 lie on the Cytoplasmic side of the membrane. Residues I236–S256 form a helical membrane-spanning segment. Residues T257–Y263 lie on the Extracellular side of the membrane. Residues F264–M287 constitute an intramembrane region (helical; Pore-forming). The Extracellular segment spans residues M288–C298. The chain crosses the membrane as a helical span at residues V299 to V319. At V320–Q445 the chain is on the cytoplasmic side. The chain crosses the membrane as a helical span at residues Y446–L466. The Extracellular segment spans residues K467 to Y480. N470 is a glycosylation site (N-linked (GlcNAc...) asparagine). The helical transmembrane segment at L481 to V501 threads the bilayer. Residues E502–L504 are Cytoplasmic-facing. Residues S505–T527 form a helical membrane-spanning segment. The Extracellular portion of the chain corresponds to L528–F535. Residues I536–L550 traverse the membrane as a helical segment. Topologically, residues K551–A569 are cytoplasmic. A helical transmembrane segment spans residues S570–F590. Residues N591 to N630 are Extracellular-facing. Positions F631–M654 form an intramembrane region, helical; Pore-forming. Residues E655–T671 are Extracellular-facing. The chain crosses the membrane as a helical span at residues F672–V692. The Cytoplasmic portion of the chain corresponds to F693–T817. Residues S770–L794 are a coiled coil. Residues H785–T817 are disordered. Residues P806–T817 show a composition bias toward polar residues.

It belongs to the calcium channel alpha-1 subunit (TC 1.A.1.11) family. Two pore calcium channel subfamily. Dimer. Interacts with MTOR; the interaction is required for TPCN1 ATP sensitivity. Interacts with STX7, STX8 and STX12. Interacts with JPT2. Found in a complex with LSM12, TPCN1 and TPCN2. In terms of processing, N-glycosylated. In terms of tissue distribution, mainly expressed in epithelial tissues like lung, kidney, colon, spleen and liver (at protein level).

The protein resides in the lysosome membrane. It localises to the endosome membrane. It is found in the early endosome membrane. Its subcellular location is the recycling endosome membrane. The enzyme catalyses Na(+)(in) = Na(+)(out). It carries out the reaction Ca(2+)(in) = Ca(2+)(out). Na(+) current is inhibited by ATP in a MTORC-dependent manner. ATP sensitivity is independent of PI(3,5)P2. Probably regulated by Mg(2+) ions, cytosolic Mg(2+) selectively inhibits outward current while lysosomal Mg(2+) modestly inhibits both the outward and inward currents. In the absence of Mg(2+), NAADP readily activates TPCN2, with properties similar to PI(3,5)P2. Both current elicited by PI(3,5)P2 as well as NAADP are inhibited by tetrandrine. Its function is as follows. Intracellular channel initially characterized as a non-selective Ca(2+)-permeable channel activated by NAADP (nicotinic acid adenine dinucleotide phosphate), it is also a voltage-gated highly-selective Na(+) channel activated directly by PI(3,5)P2 (phosphatidylinositol 3,5-bisphosphate) that senses pH changes and confers electrical excitability to organelles. Localizes to the early and recycling endosomes membranes where it plays a role in the uptake and processing of proteins and regulates organellar membrane excitability, membrane trafficking and pH homeostasis. Ion selectivity is not fixed but rather agonist-dependent and under defined ionic conditions, can be readily activated by both NAADP and PI(3,5)P2. Required for mTOR-dependent nutrient sensing. This chain is Two pore calcium channel protein 1, found in Mus musculus (Mouse).